Reading from the N-terminus, the 318-residue chain is Malate dehydrogenase (318 aa).

NAD(+)-binding positions include glycine 10–glycine 15 and aspartate 34. Substrate-binding residues include arginine 83 and arginine 89. NAD(+) is bound by residues asparagine 96 and isoleucine 119–asparagine 121. Substrate is bound by residues asparagine 121 and arginine 152. Residue histidine 176 is the Proton acceptor of the active site.

This sequence belongs to the LDH/MDH superfamily. MDH type 3 family.

It catalyses the reaction (S)-malate + NAD(+) = oxaloacetate + NADH + H(+). Catalyzes the reversible oxidation of malate to oxaloacetate. The protein is Malate dehydrogenase of Rhodospirillum rubrum (strain ATCC 11170 / ATH 1.1.1 / DSM 467 / LMG 4362 / NCIMB 8255 / S1).